The chain runs to 983 residues: Ephrin type-A receptor 3 (983 aa).

The first 20 residues, 1–20 (MDCHLSILVLLGCCVLSCSG), serve as a signal peptide directing secretion. The Extracellular segment spans residues 21–540 (ELSPQPSNEV…SFSISGENSH (520 aa)). The region spanning 29–206 (EVNLLDSKTI…YFKKCPFTVK (178 aa)) is the Eph LBD domain. 5 N-linked (GlcNAc...) asparagine glycosylation sites follow: asparagine 231, asparagine 336, asparagine 390, asparagine 403, and asparagine 492. Fibronectin type-III domains follow at residues 324-434 (PPSA…TNQA) and 435-530 (APSP…TSPD). Residues 541 to 564 (VVMIAISAAVAIIVLTVVTYVLVG) form a helical membrane-spanning segment. At 565 to 983 (RFCGYHKSKH…TQSKNGPVPV (419 aa)) the chain is on the cytoplasmic side. Tyrosine 596 and tyrosine 602 each carry phosphotyrosine; by autocatalysis. In terms of domain architecture, Protein kinase spans 621–882 (ISIDKVVGAG…QIVSILDKLI (262 aa)). ATP is bound by residues 628 to 633 (GAGEFG), lysine 653, and 700 to 706 (EYMENGS). Tyrosine 701 bears the Phosphotyrosine; by autocatalysis mark. Catalysis depends on aspartate 746, which acts as the Proton acceptor. 750 to 751 (RN) is an ATP binding site. Tyrosine 779 carries the phosphotyrosine; by autocatalysis modification. Residues 911–975 (ATFHTTGDWL…ISTIKALETQ (65 aa)) form the SAM domain. Residue tyrosine 937 is modified to Phosphotyrosine. The short motif at 981-983 (VPV) is the PDZ-binding element.

The protein belongs to the protein kinase superfamily. Tyr protein kinase family. Ephrin receptor subfamily. Heterotetramer upon binding of the ligand. The heterotetramer is composed of an ephrin dimer and a receptor dimer. Oligomerization is probably required to induce biological responses. Forms a ternary EFNA5-EPHA3-ADAM10 complex mediating EFNA5 extracellular domain shedding by ADAM10 which regulates the EFNA5-EPHA3 complex internalization and function. Interacts (phosphorylated) with PTPN1; dephosphorylates EPHA3 and may regulate its trafficking and function. Interacts (phosphorylated) with CRK; mediates EFNA5-EPHA3 signaling through RHOA GTPase activation. Interacts with NCK1 (via SH2 domain); mediates EFNA5-EPHA3 signaling. In terms of processing, autophosphorylates upon activation by EFNA5. Phosphorylation on Tyr-602 mediates interaction with NCK1. Dephosphorylated by PTPN1. In terms of tissue distribution, greatest levels of expression occurring in the brain, also detected in testis. Expressed in myogenic progenitor cells.

The protein localises to the cell membrane. The protein resides in the secreted. The enzyme catalyses L-tyrosyl-[protein] + ATP = O-phospho-L-tyrosyl-[protein] + ADP + H(+). Functionally, receptor tyrosine kinase which binds promiscuously membrane-bound ephrin family ligands residing on adjacent cells, leading to contact-dependent bidirectional signaling into neighboring cells. The signaling pathway downstream of the receptor is referred to as forward signaling while the signaling pathway downstream of the ephrin ligand is referred to as reverse signaling. Highly promiscuous for ephrin-A ligands it binds preferentially EFNA5. Upon activation by EFNA5 regulates cell-cell adhesion, cytoskeletal organization and cell migration. Plays a role in cardiac cells migration and differentiation and regulates the formation of the atrioventricular canal and septum during development probably through activation by EFNA1. Involved in the retinotectal mapping of neurons. May also control the segregation but not the guidance of motor and sensory axons during neuromuscular circuit development. The chain is Ephrin type-A receptor 3 (Epha3) from Mus musculus (Mouse).